A 444-amino-acid polypeptide reads, in one-letter code: Glutamate-1-semialdehyde 2,1-aminomutase (444 aa).

Lysine 267 is subject to N6-(pyridoxal phosphate)lysine.

This sequence belongs to the class-III pyridoxal-phosphate-dependent aminotransferase family. HemL subfamily. As to quaternary structure, homodimer. It depends on pyridoxal 5'-phosphate as a cofactor.

The protein resides in the cytoplasm. It carries out the reaction (S)-4-amino-5-oxopentanoate = 5-aminolevulinate. It functions in the pathway porphyrin-containing compound metabolism; protoporphyrin-IX biosynthesis; 5-aminolevulinate from L-glutamyl-tRNA(Glu): step 2/2. This is Glutamate-1-semialdehyde 2,1-aminomutase from Xylella fastidiosa (strain Temecula1 / ATCC 700964).